Here is a 228-residue protein sequence, read N- to C-terminus: Ribonuclease 3 (228 aa).

Residues Leu-2–Gly-130 form the RNase III domain. Glu-43 contributes to the Mg(2+) binding site. Residue Asp-47 is part of the active site. Positions 116 and 119 each coordinate Mg(2+). Glu-119 is an active-site residue. Positions Asp-157 to Ile-226 constitute a DRBM domain.

The protein belongs to the ribonuclease III family. Homodimer. It depends on Mg(2+) as a cofactor.

The protein resides in the cytoplasm. The catalysed reaction is Endonucleolytic cleavage to 5'-phosphomonoester.. Digests double-stranded RNA. Involved in the processing of primary rRNA transcript to yield the immediate precursors to the large and small rRNAs (23S and 16S). Processes some mRNAs, and tRNAs when they are encoded in the rRNA operon. Processes pre-crRNA and tracrRNA of type II CRISPR loci if present in the organism. The chain is Ribonuclease 3 from Caldanaerobacter subterraneus subsp. tengcongensis (strain DSM 15242 / JCM 11007 / NBRC 100824 / MB4) (Thermoanaerobacter tengcongensis).